A 218-amino-acid polypeptide reads, in one-letter code: Ribose-5-phosphate isomerase A (218 aa).

Substrate contacts are provided by residues 28–31, 81–84, and 94–97; these read TGST, DGAD, and KGGG. Glutamate 103 serves as the catalytic Proton acceptor. Lysine 121 provides a ligand contact to substrate.

It belongs to the ribose 5-phosphate isomerase family. In terms of assembly, homodimer.

The catalysed reaction is aldehydo-D-ribose 5-phosphate = D-ribulose 5-phosphate. It functions in the pathway carbohydrate degradation; pentose phosphate pathway; D-ribose 5-phosphate from D-ribulose 5-phosphate (non-oxidative stage): step 1/1. Functionally, catalyzes the reversible conversion of ribose-5-phosphate to ribulose 5-phosphate. The protein is Ribose-5-phosphate isomerase A of Psychromonas ingrahamii (strain DSM 17664 / CCUG 51855 / 37).